Reading from the N-terminus, the 238-residue chain is Phosphoribosylaminoimidazole-succinocarboxamide synthase (238 aa).

It belongs to the SAICAR synthetase family.

It catalyses the reaction 5-amino-1-(5-phospho-D-ribosyl)imidazole-4-carboxylate + L-aspartate + ATP = (2S)-2-[5-amino-1-(5-phospho-beta-D-ribosyl)imidazole-4-carboxamido]succinate + ADP + phosphate + 2 H(+). It participates in purine metabolism; IMP biosynthesis via de novo pathway; 5-amino-1-(5-phospho-D-ribosyl)imidazole-4-carboxamide from 5-amino-1-(5-phospho-D-ribosyl)imidazole-4-carboxylate: step 1/2. This chain is Phosphoribosylaminoimidazole-succinocarboxamide synthase (purC), found in Pyrococcus horikoshii (strain ATCC 700860 / DSM 12428 / JCM 9974 / NBRC 100139 / OT-3).